A 485-amino-acid chain; its full sequence is Protein disulfide isomerase-like 5-4 (485 aa).

Residues 114–263 (VPTGSEFHPG…LVAAMETYVA (150 aa)) form the Thioredoxin domain. Cys170 acts as the Nucleophile in catalysis. Residues 444 to 464 (FSHFITNVCAIIGGVFTVAGI) form a helical membrane-spanning segment.

Belongs to the protein disulfide isomerase family.

The protein localises to the membrane. In terms of biological role, acts as a protein-folding catalyst that interacts with nascent polypeptides to catalyze the formation, isomerization, and reduction or oxidation of disulfide bonds. May play a role in storage protein biogenesis. The polypeptide is Protein disulfide isomerase-like 5-4 (PDIL5-4) (Oryza sativa subsp. japonica (Rice)).